The chain runs to 401 residues: Homoserine O-acetyltransferase (401 aa).

An AB hydrolase-1 domain is found at 37–358; that stretch reads NAVLVCHALT…HGHDAFLVEP (322 aa). The Nucleophile role is filled by S146. R215 lines the substrate pocket. Catalysis depends on residues D318 and H351. A substrate-binding site is contributed by D352.

Belongs to the AB hydrolase superfamily. MetX family. Homodimer.

The protein resides in the cytoplasm. It carries out the reaction L-homoserine + acetyl-CoA = O-acetyl-L-homoserine + CoA. Its pathway is amino-acid biosynthesis; L-methionine biosynthesis via de novo pathway; O-acetyl-L-homoserine from L-homoserine: step 1/1. In terms of biological role, transfers an acetyl group from acetyl-CoA to L-homoserine, forming acetyl-L-homoserine. The chain is Homoserine O-acetyltransferase from Natronomonas pharaonis (strain ATCC 35678 / DSM 2160 / CIP 103997 / JCM 8858 / NBRC 14720 / NCIMB 2260 / Gabara) (Halobacterium pharaonis).